The sequence spans 233 residues: Phosphoribosylformylglycinamidine synthase subunit PurQ (233 aa).

Residues 3 to 233 (SAILVFPGIN…GLVAHLERAA (231 aa)) enclose the Glutamine amidotransferase type-1 domain. The active-site Nucleophile is the Cys87. Catalysis depends on residues His204 and Glu206.

As to quaternary structure, part of the FGAM synthase complex composed of 1 PurL, 1 PurQ and 2 PurS subunits.

It is found in the cytoplasm. It catalyses the reaction N(2)-formyl-N(1)-(5-phospho-beta-D-ribosyl)glycinamide + L-glutamine + ATP + H2O = 2-formamido-N(1)-(5-O-phospho-beta-D-ribosyl)acetamidine + L-glutamate + ADP + phosphate + H(+). It carries out the reaction L-glutamine + H2O = L-glutamate + NH4(+). Its pathway is purine metabolism; IMP biosynthesis via de novo pathway; 5-amino-1-(5-phospho-D-ribosyl)imidazole from N(2)-formyl-N(1)-(5-phospho-D-ribosyl)glycinamide: step 1/2. Functionally, part of the phosphoribosylformylglycinamidine synthase complex involved in the purines biosynthetic pathway. Catalyzes the ATP-dependent conversion of formylglycinamide ribonucleotide (FGAR) and glutamine to yield formylglycinamidine ribonucleotide (FGAM) and glutamate. The FGAM synthase complex is composed of three subunits. PurQ produces an ammonia molecule by converting glutamine to glutamate. PurL transfers the ammonia molecule to FGAR to form FGAM in an ATP-dependent manner. PurS interacts with PurQ and PurL and is thought to assist in the transfer of the ammonia molecule from PurQ to PurL. The protein is Phosphoribosylformylglycinamidine synthase subunit PurQ of Nitrobacter hamburgensis (strain DSM 10229 / NCIMB 13809 / X14).